The sequence spans 144 residues: Transcription antitermination protein NusB (144 aa).

The protein belongs to the NusB family.

Functionally, involved in transcription antitermination. Required for transcription of ribosomal RNA (rRNA) genes. Binds specifically to the boxA antiterminator sequence of the ribosomal RNA (rrn) operons. This chain is Transcription antitermination protein NusB, found in Streptococcus thermophilus (strain CNRZ 1066).